The chain runs to 292 residues: Tricin synthase 2 (292 aa).

The segment at 21–46 (RTTPASRVSSTAMAAANGDASHGANG) is disordered. The segment covering 23–32 (TPASRVSSTA) has biased composition (polar residues). S-adenosyl-L-methionine is bound by residues Ser108, Glu130, 132-133 (GV), Ser138, Asp156, and Ala185. Asp208 contributes to the a divalent metal cation binding site. Asp210 serves as a coordination point for S-adenosyl-L-methionine. A divalent metal cation contacts are provided by Asp234 and Asn235.

Belongs to the class I-like SAM-binding methyltransferase superfamily. Cation-dependent O-methyltransferase family. CCoAMT subfamily. The cofactor is Mg(2+). It depends on Mn(2+) as a cofactor. As to expression, expressed in stems only.

It catalyses the reaction tricetin + 2 S-adenosyl-L-methionine = 3',5'-di-O-methyltricetin + 2 S-adenosyl-L-homocysteine + 2 H(+). Its function is as follows. Catalyzes the stepwise methylation of tricetin to its 3'-mono- and 3',5'-dimethyl ethers. No 3',4',5'-trimethylated ester derivatives are produced. Can use caffeoyl CoA, 5-hydroxyferulic acid, luteolin, tricetin, quercetin, myrcetin and 7,8-dihydroxyflavone as substrates, but not naringenin, apigenin or kaempferol. The 2,3-double bond and the O-dihydroxyl group of the substrate are both required for catalytic activity of the enzyme. In Oryza sativa subsp. japonica (Rice), this protein is Tricin synthase 2 (ROMT-17).